The chain runs to 144 residues: Large ribosomal subunit protein uL16 (144 aa).

Belongs to the universal ribosomal protein uL16 family. As to quaternary structure, part of the 50S ribosomal subunit.

In terms of biological role, binds 23S rRNA and is also seen to make contacts with the A and possibly P site tRNAs. This Acidobacterium capsulatum (strain ATCC 51196 / DSM 11244 / BCRC 80197 / JCM 7670 / NBRC 15755 / NCIMB 13165 / 161) protein is Large ribosomal subunit protein uL16.